The primary structure comprises 443 residues: Nuclear pore complex-interacting protein family member B15 (443 aa).

The signal sequence occupies residues 1–18; that stretch reads MRLRFWLLIWLLLGFISH. Residue Asn111 is glycosylated (N-linked (GlcNAc...) asparagine). 2 disordered regions span residues 242–262 and 330–413; these read RMGRQPPPPTQQHSITDNSLS and SPLP…TRHC. The segment covering 252 to 262 has biased composition (polar residues); sequence QQHSITDNSLS. The segment covering 351-393 has biased composition (basic and acidic residues); the sequence is EAEKPPKPKRWRVDEVEQSPKPKRRRADEVEQSPKPKRQREAE. The segment covering 399–412 has biased composition (basic residues); sequence KPKRRRLSKLRTRH.

The protein belongs to the NPIP family.

It is found in the secreted. The sequence is that of Nuclear pore complex-interacting protein family member B15 (NPIPB15) from Homo sapiens (Human).